The chain runs to 123 residues: Guanine nucleotide exchange factor MSS4 (123 aa).

Met-1 carries the post-translational modification N-acetylmethionine. The MSS4 domain maps to 9–123; the sequence is ELVSAEGRNR…YVALERVSHE (115 aa). 4 residues coordinate Zn(2+): Cys-23, Cys-26, Cys-94, and Cys-97.

It belongs to the DSS4/MSS4 family. As to quaternary structure, interacts with RAB8A.

Guanine-nucleotide-releasing protein that acts on members of the SEC4/YPT1/RAB subfamily. Stimulates GDP release from both YPT1, RAB3A and RAB10, but is less active on these proteins than on the SEC4 protein. Might play a general role in vesicular transport. This is Guanine nucleotide exchange factor MSS4 from Mus musculus (Mouse).